The sequence spans 313 residues: Nucleoside diphosphate-linked moiety X motif 6 (313 aa).

A Nudix hydrolase domain is found at 138 to 270 (THQVGVAGAV…TSRVARLLLY (133 aa)).

Belongs to the Nudix hydrolase family. Monomer and homodimer.

The protein localises to the cytoplasm. Its subcellular location is the nucleus. The protein resides in the mitochondrion. May contribute to the regulation of cell proliferation. The sequence is that of Nucleoside diphosphate-linked moiety X motif 6 (Nudt6) from Mus musculus (Mouse).